The primary structure comprises 505 residues: Adenylosuccinate synthetase, chloroplastic (505 aa).

The N-terminal 60 residues, 1 to 60, are a transit peptide targeting the chloroplast; the sequence is MTTMNISTLRLDSNPITTSTKSTTHRSGALGYNGSYSCRLLQFQKKNKAPSIIVCSTKPL. Residues 92-98 and 120-122 contribute to the GTP site; these read GDEGKGK and GHT. Residue Asp-93 is the Proton acceptor of the active site. Residues Asp-93 and Gly-120 each contribute to the Mg(2+) site. IMP contacts are provided by residues 93–96, 118–121, Thr-210, Arg-224, Gln-304, Thr-319, and Arg-383; these read DEGK and NAGH. The Proton donor role is filled by His-121. 379 to 385 contributes to the substrate binding site; it reads TTTGRPR. Residues Arg-385, 411–413, and 494–496 each bind GTP; these read KLD and GVG.

The protein belongs to the adenylosuccinate synthetase family. Homodimer. Requires Mg(2+) as cofactor.

It localises to the plastid. It is found in the chloroplast. The enzyme catalyses IMP + L-aspartate + GTP = N(6)-(1,2-dicarboxyethyl)-AMP + GDP + phosphate + 2 H(+). The protein operates within purine metabolism; AMP biosynthesis via de novo pathway; AMP from IMP: step 1/2. Functionally, plays an important role in the de novo pathway and in the salvage pathway of purine nucleotide biosynthesis. Catalyzes the first committed step in the biosynthesis of AMP from IMP. The chain is Adenylosuccinate synthetase, chloroplastic from Nicotiana tabacum (Common tobacco).